The primary structure comprises 1088 residues: RNA-directed RNA polymerase (1088 aa).

The 187-residue stretch at 501–687 (LSYGDVTRFL…AKRYIAGGKI (187 aa)) folds into the RdRp catalytic domain.

It belongs to the reoviridae RNA-directed RNA polymerase family. As to quaternary structure, interacts with VP3 (Potential). Interacts with VP2; this interaction activates VP1. Interacts with NSP5; this interaction is probably necessary for the formation of functional virus factories. Interacts with NSP2; this interaction is weak. Requires Mg(2+) as cofactor.

It is found in the virion. The catalysed reaction is RNA(n) + a ribonucleoside 5'-triphosphate = RNA(n+1) + diphosphate. Functionally, RNA-directed RNA polymerase that is involved in both transcription and genome replication. Together with VP3 capping enzyme, forms an enzyme complex positioned near the channels situated at each of the five-fold vertices of the core. Following infection, the outermost layer of the virus is lost, leaving a double-layered particle (DLP) made up of the core and VP6 shell. VP1 then catalyzes the transcription of fully conservative plus-strand genomic RNAs that are extruded through the DLP's channels into the cytoplasm where they function as mRNAs for translation of viral proteins. One copy of each of the viral (+)RNAs is also recruited during core assembly, together with newly synthesized polymerase complexes and VP2. The polymerase of these novo-formed particles catalyzes the synthesis of complementary minus-strands leading to dsRNA formation. To do so, the polymerase specifically recognizes and binds 4 bases 5'-UGUG-3' in the conserved 3'-sequence of plus-strand RNA templates. VP2 presumably activates the autoinhibited VP1-RNA complex to coordinate packaging and genome replication. Once dsRNA synthesis is complete, the polymerase switches to the transcriptional mode, thus providing secondary transcription. The protein is RNA-directed RNA polymerase of Sus scrofa (Pig).